The primary structure comprises 235 residues: Thiamine import ATP-binding protein ThiQ (235 aa).

An ABC transporter domain is found at 2–230; sequence LKLENLTYRY…TVPEAAILGM (229 aa). 32–39 contributes to the ATP binding site; that stretch reads GPSGAGKS.

This sequence belongs to the ABC transporter superfamily. Thiamine importer (TC 3.A.1.19.1) family. As to quaternary structure, the complex is composed of two ATP-binding proteins (ThiQ), two transmembrane proteins (ThiP) and a solute-binding protein (ThiB).

Its subcellular location is the cell inner membrane. It carries out the reaction thiamine(out) + ATP + H2O = thiamine(in) + ADP + phosphate + H(+). Its function is as follows. Part of the ABC transporter complex ThiBPQ involved in thiamine import. Responsible for energy coupling to the transport system. This chain is Thiamine import ATP-binding protein ThiQ, found in Photorhabdus laumondii subsp. laumondii (strain DSM 15139 / CIP 105565 / TT01) (Photorhabdus luminescens subsp. laumondii).